The chain runs to 548 residues: MAKEILFRDEARQRMAKGVNILADAVKVTLGPKGRNVVLEKSFGAPSITKDGVSVAREIELEDKFENMGAQMVKEVASKANDEAGDGTTTATVLAQAFVNEGLKSVTAGMNPMDLKRGIDQAVAAVVEELKKLSTPCDNTKSIEQVGTISANADKSVGEIIAQAMEKVGQEGVITVEEGQSLQNELDVVEGMQFDRGYLSPYFINNQEKMQVELEDPYILLVDKKISNIRELLPALENVAKAGKPLLIIAEDIEGEALATLVVNNMRGIIKCAAVKAPGFGDRRKAMLQDIAILTGGTVISEEVGLSLENASLEDLGTAKKVNIDKENTTIVDGAGQQADIDGRVEQIRKEIENSSSDYDKEKLQERVAKLAGGVAVIKIGAATEIEMKEKKARVDDALHATRAAVEEGVVPGGGVALVRALANVGTIKGDNDEQNAGIALTFRALEMPLRQIAYNAGAEASVIVQEVRNGKGNYGYNAASGEYGDMLEMGILDPAKVTRSALQAAASIAGLMITTEAMVADKPEENAGAGAPDMGGMGGMGGMGGMM.

Residues 29-32, Lys50, 86-90, Gly414, 478-480, and Asp494 each bind ATP; these read TLGP, DGTTT, and NAA.

Belongs to the chaperonin (HSP60) family. Forms a cylinder of 14 subunits composed of two heptameric rings stacked back-to-back. Interacts with the co-chaperonin GroES.

The protein resides in the cytoplasm. The catalysed reaction is ATP + H2O + a folded polypeptide = ADP + phosphate + an unfolded polypeptide.. Its function is as follows. Together with its co-chaperonin GroES, plays an essential role in assisting protein folding. The GroEL-GroES system forms a nano-cage that allows encapsulation of the non-native substrate proteins and provides a physical environment optimized to promote and accelerate protein folding. The polypeptide is Chaperonin GroEL (Alcanivorax borkumensis (strain ATCC 700651 / DSM 11573 / NCIMB 13689 / SK2)).